The chain runs to 355 residues: Isocitrate dehydrogenase [NAD] subunit gamma, mitochondrial (355 aa).

A transit peptide (mitochondrion) is located at residue Ile-1. Residues Thr-82 and Asn-95 each coordinate citrate. Positions 98, 129, and 216 each coordinate substrate. Asp-216 contacts Mn(2+). Positions 274, 275, and 286 each coordinate ADP.

This sequence belongs to the isocitrate and isopropylmalate dehydrogenases family. In terms of assembly, heterooligomer of subunits alpha (IDH3A), beta (IDH3B), and gamma (IDH3G) in the apparent ratio of 2:1:1. The heterodimer containing one IDH3A and one IDH3B subunit and the heterodimer containing one IDH3A and one IDH3G subunit assemble into a heterotetramer (which contains two subunits of IDH3A, one of IDH3B and one of IDH3G) and further into the heterooctamer. Requires Mg(2+) as cofactor. The cofactor is Mn(2+).

The protein resides in the mitochondrion. Its activity is regulated as follows. The heterotetramer and the heterodimer composed of IDH3A and IDH3G subunits can be allosterically activated by citrate (CIT) or/and ADP, and the two activators can act independently or synergistically. The heterodimer composed of IDH3A and IDH3B subunits cannot be allosterically regulated and the allosteric regulation of the heterotetramer is through the IDH3G subunit and not the IDH3B subunit. The IDH3G subunit contains the allosteric site which consists of a CIT-binding site and an ADP-binding site, and the binding of CIT and ADP causes conformational changes at the allosteric site which are transmitted to the active site in the catalytic subunit (IDH3A) through a cascade of conformational changes at the heterodimer interface, leading to stabilization of the isocitrate-binding at the active site and thus activation of the enzyme. ATP can activate the heterotetramer and the heterodimer composed of IDH3A and IDH3G subunits at low concentrations but inhibits their activities at high concentrations, whereas ATP exhibits only inhibitory effect on the heterodimer composed of IDH3A and IDH3B subunits. In terms of biological role, regulatory subunit which plays a role in the allosteric regulation of the enzyme catalyzing the decarboxylation of isocitrate (ICT) into alpha-ketoglutarate. The heterodimer composed of the alpha (IDH3A) and beta (IDH3B) subunits and the heterodimer composed of the alpha (IDH3A) and gamma (IDH3G) subunits, have considerable basal activity but the full activity of the heterotetramer (containing two subunits of IDH3A, one of IDH3B and one of IDH3G) requires the assembly and cooperative function of both heterodimers. This is Isocitrate dehydrogenase [NAD] subunit gamma, mitochondrial (IDH3G) from Macaca fascicularis (Crab-eating macaque).